We begin with the raw amino-acid sequence, 445 residues long: Exodeoxyribonuclease 7 large subunit (445 aa).

The protein belongs to the XseA family. In terms of assembly, heterooligomer composed of large and small subunits.

The protein localises to the cytoplasm. It carries out the reaction Exonucleolytic cleavage in either 5'- to 3'- or 3'- to 5'-direction to yield nucleoside 5'-phosphates.. Functionally, bidirectionally degrades single-stranded DNA into large acid-insoluble oligonucleotides, which are then degraded further into small acid-soluble oligonucleotides. The polypeptide is Exodeoxyribonuclease 7 large subunit (Nautilia profundicola (strain ATCC BAA-1463 / DSM 18972 / AmH)).